The primary structure comprises 329 residues: T-cell acute lymphocytic leukemia protein 1 homolog (329 aa).

Disordered stretches follow at residues 1–28 (MTER…RMAP), 40–78 (ETSR…KGRD), and 91–125 (TELC…SPPA). Phosphoserine is present on serine 12. A compositionally biased stretch (gly residues) spans 58 to 70 (SGAGGGPASGGGA). Over residues 96–106 (PPGPAPAPAPA) the composition is skewed to pro residues. Serine 122 carries the phosphoserine; by MAPK modification. Position 172 is a phosphoserine (serine 172). The region spanning 187 to 239 (VRRIFTNSRERWRQQNVNGAFAELRKLIPTHPPDKKLSKNEILRLAMKYINFL) is the bHLH domain. Residues 247 to 329 (EEEGTQRAKP…LPAADGAGPR (83 aa)) are disordered. Residues 263–273 (GAGGGGAGGGI) are compositionally biased toward gly residues. Low complexity predominate over residues 317–329 (PALLPAADGAGPR).

In terms of assembly, efficient DNA binding requires dimerization with another bHLH protein. Forms heterodimers with TCF3. Binds to the LIM domain containing protein LMO2 and to DRG1. Can assemble in a complex with LDB1 and LMO2. Component of a TAL-1 complex composed at least of CBFA2T3, LDB1, TAL1 and TCF3. Interacts with SBNO2; this interaction inhibits TAL1 occupancy of the DCSTAMP promoter, leading to the activation of the DCSTAMP promoter by the transcription factor MITF. Phosphorylated on serine residues. Phosphorylation of Ser-122 by MAPK is strongly stimulated by hypoxia. In terms of processing, ubiquitinated; subsequent to hypoxia-dependent phosphorylation of Ser-122, ubiquitination targets the protein for rapid degradation via the ubiquitin system. This process may be characteristic for microvascular endothelial cells, since it could not be observed in large vessel endothelial cells. As to expression, erythroid and myeloid cells.

The protein localises to the nucleus. Its function is as follows. Implicated in the genesis of hemopoietic malignancies. It may play an important role in hemopoietic differentiation. Serves as a positive regulator of erythroid differentiation. This is T-cell acute lymphocytic leukemia protein 1 homolog (Tal1) from Mus musculus (Mouse).